The following is a 195-amino-acid chain: Protein GrpE (195 aa).

It belongs to the GrpE family. In terms of assembly, homodimer.

It is found in the cytoplasm. Functionally, participates actively in the response to hyperosmotic and heat shock by preventing the aggregation of stress-denatured proteins, in association with DnaK and GrpE. It is the nucleotide exchange factor for DnaK and may function as a thermosensor. Unfolded proteins bind initially to DnaJ; upon interaction with the DnaJ-bound protein, DnaK hydrolyzes its bound ATP, resulting in the formation of a stable complex. GrpE releases ADP from DnaK; ATP binding to DnaK triggers the release of the substrate protein, thus completing the reaction cycle. Several rounds of ATP-dependent interactions between DnaJ, DnaK and GrpE are required for fully efficient folding. In Francisella tularensis subsp. mediasiatica (strain FSC147), this protein is Protein GrpE.